A 406-amino-acid chain; its full sequence is RING finger protein PSH1 (406 aa).

Residues 30–72 (CSICHDYMFVPMMTPCGHNYCYGCLNTWFASNTQKELACPQCR) form an RING-type zinc finger. Ser-143 and Ser-191 each carry phosphoserine. The interval 209–406 (RFASTNPFAN…RVVLGDSDDE (198 aa)) is disordered. 3 stretches are compositionally biased toward acidic residues: residues 223 to 232 (SSEDDDSSEE), 256 to 274 (AVDD…EEMD), and 281 to 291 (IEDDEDDEDED). A Phosphothreonine modification is found at Thr-310. A Phosphoserine modification is found at Ser-403.

In terms of assembly, interacts with POB3 and SPT16.

The protein localises to the nucleus. The protein is RING finger protein PSH1 (PSH1) of Saccharomyces cerevisiae (strain ATCC 204508 / S288c) (Baker's yeast).